The primary structure comprises 292 residues: UDP-N-acetylenolpyruvoylglucosamine reductase (292 aa).

The region spanning 27 to 188 is the FAD-binding PCMH-type domain; it reads KIGGPVRLFI…LRVGFRIIKG (162 aa). Residue arginine 166 is part of the active site. Serine 217 (proton donor) is an active-site residue. Glutamate 288 is an active-site residue.

This sequence belongs to the MurB family. The cofactor is FAD.

The protein resides in the cytoplasm. It catalyses the reaction UDP-N-acetyl-alpha-D-muramate + NADP(+) = UDP-N-acetyl-3-O-(1-carboxyvinyl)-alpha-D-glucosamine + NADPH + H(+). It functions in the pathway cell wall biogenesis; peptidoglycan biosynthesis. Its function is as follows. Cell wall formation. The chain is UDP-N-acetylenolpyruvoylglucosamine reductase from Thermosipho melanesiensis (strain DSM 12029 / CIP 104789 / BI429).